Reading from the N-terminus, the 154-residue chain is Protein X (154 aa).

A mitochondrial targeting sequence region spans residues 68-117 (PCALRFTSARRMETTVNAHRNLPKVLHKRTLGLSAMSTTDLEAYFKDCVF).

The protein belongs to the orthohepadnavirus protein X family. As to quaternary structure, may form homodimer. May interact with host CEBPA, CFLAR, CREB1, DDB1, E4F1, HBXIP, HSPD1/HSP60, NFKBIA, POLR2E and SMAD4. Interacts with host SMC5-SMC6 complex and induces its degradation. Interacts with host TRPC4AP; leading to prevent ubiquitination of TRPC4AP. Interacts with host PLSCR1; this interaction promotes ubiquitination and degradation of HBx and impairs HBx-mediated cell proliferation. In terms of processing, a fraction may be phosphorylated in insect cells and HepG2 cells, a human hepatoblastoma cell line. Phosphorylated in vitro by host protein kinase C or mitogen-activated protein kinase. N-acetylated in insect cells.

It localises to the host cytoplasm. Its subcellular location is the host nucleus. The protein localises to the host mitochondrion. Multifunctional protein that plays a role in silencing host antiviral defenses and promoting viral transcription. Does not seem to be essential for HBV infection. May be directly involved in development of cirrhosis and liver cancer (hepatocellular carcinoma). Most of cytosolic activities involve modulation of cytosolic calcium. The effect on apoptosis is controversial depending on the cell types in which the studies have been conducted. May induce apoptosis by localizing in mitochondria and causing loss of mitochondrial membrane potential. May also modulate apoptosis by binding host CFLAR, a key regulator of the death-inducing signaling complex (DISC). Promotes viral transcription by using the host E3 ubiquitin ligase DDB1 to target the SMC5-SMC6 complex to proteasomal degradation. This host complex would otherwise bind to viral episomal DNA, and prevents its transcription. Moderately stimulates transcription of many different viral and cellular transcription elements. Promoters and enhancers stimulated by HBx contain DNA binding sites for NF-kappa-B, AP-1, AP-2, c-EBP, ATF/CREB, or the calcium-activated factor NF-AT. The sequence is that of Protein X from Homo sapiens (Human).